Here is a 555-residue protein sequence, read N- to C-terminus: MATTNTFSDFKLASELPAWAKLQELYEKKGKTLSLKEAFATDEQRFQKYSRTFSNHDGSKILFDFSKNLVDDEILGALAQLAREANVTQLRDQMFNGEHINSTEDRAVYHVALRNRANKPMYVDGKNVAPEVDAVLQHMKEFSEQVRSGAWKGYTGKSIKDVVNIGIGGSDLGPVMVTEALKHYAGPLKVHFVSNIDGTHLAETLKEVDPETTLFLVASKTFTTAETITNATSAKNWFLSKTGNNPAHISKHFAALSTNETEVAKFGIDTKNMFGFESWVGGRYSVWSAIGLSVALYIGFDQFEDFLKGAEAVDKHFTSTPIEDNIPLLGGLLSVWYNNFFDAQTHLVVPFDQYLHRFPAYLQQLSMESNGKSVTRGNVFANYSTGSILFGEPATNAQHSFFQLVHQGTKVIPSDFILAAQSHNPIENNLHQKMLASNFFAQAEALMVGKDEAQVKAEGATGGLVPHKVFSGNRPTTSILVQKITPANLGALIAYYEHVTFTEGAIWNINSFDQWGVELGKVLAKVIGKDLDTTGETTSHDASTNGLINQFKAWL.

D-glucose 6-phosphate-binding positions include glycine 169–serine 170, serine 219–threonine 224, glutamine 364, glutamate 368, histidine 399, and lysine 521. Glutamate 368 acts as the Proton donor in catalysis. Active-site residues include histidine 399 and lysine 521.

The protein belongs to the GPI family. In terms of assembly, homodimer.

It localises to the cytoplasm. The protein localises to the cytosol. The catalysed reaction is alpha-D-glucose 6-phosphate = beta-D-fructose 6-phosphate. It functions in the pathway carbohydrate degradation; glycolysis; D-glyceraldehyde 3-phosphate and glycerone phosphate from D-glucose: step 2/4. Its function is as follows. In the cytoplasm, catalyzes the conversion of glucose-6-phosphate to fructose-6-phosphate, the second step in glycolysis, and the reverse reaction during gluconeogenesis. The protein is Glucose-6-phosphate isomerase (PGI1) of Eremothecium gossypii (strain ATCC 10895 / CBS 109.51 / FGSC 9923 / NRRL Y-1056) (Yeast).